A 333-amino-acid polypeptide reads, in one-letter code: MLDYEWDNPSSIVLSGDERNPDSDPTRSSFSFFDPISHYNNDHRHITISPPLLSSFSNQQQQHHLTLYGQTNSNNQFLHHHHHHHSLYGSTTTTTPYGASDPIYHPHSSAPPASLFSYDQTGPGSGSGSSYNFLIPKTEVDFTSNRIGLNLGGRTYFSAADDDFVSRLYRRSRPGESGMANSLSTPRCQAEGCNADLSHAKHYHRRHKVCEFHSKASTVVAAGLSQRFCQQCSRFHLLSEFDNGKRSCRKRLADHNRRRRKCHQSASATQDTGTGKTTPKSPNDSGVKASSSPSSNAPPTISLECFRQRQFQTTASSSTSASSSSNSMFFSSG.

Residues 1–28 are disordered; the sequence is MLDYEWDNPSSIVLSGDERNPDSDPTRS. Positions 16 to 25 are enriched in basic and acidic residues; sequence GDERNPDSDP. Residues 179 to 269 form a sufficient and necessary for DNA binding region; that stretch reads MANSLSTPRC…RKCHQSASAT (91 aa). An SBP-type zinc finger spans residues 185–262; the sequence is TPRCQAEGCN…ADHNRRRRKC (78 aa). Zn(2+) contacts are provided by Cys-188, Cys-193, Cys-210, His-213, Cys-229, Cys-232, His-236, and Cys-248. A Bipartite nuclear localization signal motif is present at residues 245–261; the sequence is KRSCRKRLADHNRRRRK. 2 disordered regions span residues 254–303 and 314–333; these read DHNR…TISL and TASS…FSSG. Residues 264-284 show a composition bias toward polar residues; sequence QSASATQDTGTGKTTPKSPND. Positions 289 to 299 are enriched in low complexity; sequence ASSSPSSNAPP.

The cofactor is Zn(2+). As to expression, expressed in shoot apical region and early floral tissues. Transcripts levels increase in developing pollen sacs, and decrease in later stage of anther development. Strongly expressed in the placental region of the carpels.

The protein localises to the nucleus. It localises to the cytoplasm. Functionally, trans-acting factor that binds specifically to the consensus nucleotide sequence 5'-TNCGTACAA-3'. Binds specifically to the 5'-GTAC-3' core sequence. Involved in development and floral organogenesis. Required for ovule differentiation, pollen production, filament elongation, seed formation and siliques elongation. Also seems to play a role in the formation of trichomes on sepals. May positively modulate gibberellin (GA) signaling in flower. The polypeptide is Squamosa promoter-binding-like protein 8 (SPL8) (Arabidopsis thaliana (Mouse-ear cress)).